The sequence spans 381 residues: Arf-GAP with dual PH domain-containing protein 2 (381 aa).

Positions 9–132 (KRLLELLQAA…TAIDKAVSHP (124 aa)) constitute an Arf-GAP domain. The C4-type zinc-finger motif lies at 25–48 (CADCGAADPDWASYKLGIFICLHC). PH domains follow at residues 132 to 233 (PGNR…AARL) and 255 to 361 (NYLK…GVLS).

It localises to the cytoplasm. The protein localises to the cell membrane. In terms of biological role, GTPase-activating protein for the ADP ribosylation factor family (Potential). Binds phosphatidylinositol 3,4,5-trisphosphate (PtdInsP3) and inositol 1,3,4,5-tetrakisphosphate (InsP4). Possesses a stoichiometry of two binding sites for InsP4 with identical affinity. The polypeptide is Arf-GAP with dual PH domain-containing protein 2 (Adap2) (Mus musculus (Mouse)).